The following is a 230-amino-acid chain: Orotidine 5'-phosphate decarboxylase (230 aa).

Residues Asp-11, Lys-34, 61–70, Thr-117, Arg-179, Gln-188, Gly-208, and Arg-209 contribute to the substrate site; that span reads DLKLHDIPNT. Lys-63 functions as the Proton donor in the catalytic mechanism.

Belongs to the OMP decarboxylase family. Type 1 subfamily. As to quaternary structure, homodimer.

It catalyses the reaction orotidine 5'-phosphate + H(+) = UMP + CO2. The protein operates within pyrimidine metabolism; UMP biosynthesis via de novo pathway; UMP from orotate: step 2/2. Catalyzes the decarboxylation of orotidine 5'-monophosphate (OMP) to uridine 5'-monophosphate (UMP). The chain is Orotidine 5'-phosphate decarboxylase from Streptococcus pyogenes serotype M28 (strain MGAS6180).